The sequence spans 468 residues: ATP synthase subunit beta (468 aa).

Position 155–162 (155–162 (GGAGVGKT)) interacts with ATP.

The protein belongs to the ATPase alpha/beta chains family. In terms of assembly, F-type ATPases have 2 components, CF(1) - the catalytic core - and CF(0) - the membrane proton channel. CF(1) has five subunits: alpha(3), beta(3), gamma(1), delta(1), epsilon(1). CF(0) has three main subunits: a(1), b(2) and c(9-12). The alpha and beta chains form an alternating ring which encloses part of the gamma chain. CF(1) is attached to CF(0) by a central stalk formed by the gamma and epsilon chains, while a peripheral stalk is formed by the delta and b chains.

It is found in the cell membrane. The catalysed reaction is ATP + H2O + 4 H(+)(in) = ADP + phosphate + 5 H(+)(out). Its function is as follows. Produces ATP from ADP in the presence of a proton gradient across the membrane. The catalytic sites are hosted primarily by the beta subunits. In Bacillus cereus (strain ATCC 10987 / NRS 248), this protein is ATP synthase subunit beta.